We begin with the raw amino-acid sequence, 174 residues long: uncharacterized protein (174 aa).

This is an uncharacterized protein from Dictyostelium discoideum (Social amoeba).